The sequence spans 507 residues: TOM1-like protein 2 (507 aa).

Residues 20-152 (ATDGSLQSED…ELKRRGIEFP (133 aa)) enclose the VHS domain. The residue at position 160 (Ser-160) is a Phosphoserine. At Thr-164 the chain carries Phosphothreonine. The tract at residues 164–200 (TPQRSVPEMDPAATIPRSQTQPRTTAGTYSSPPPASY) is disordered. One can recognise a GAT domain in the interval 219-307 (EQIARLRSEL…VFLRYERFER (89 aa)). Residues 329–334 (NLIDLG) carry the Clathrin-binding motif. The disordered stretch occupies residues 466-507 (ERAKAAETVPDLPSPPTEAPAPASNTSTRKKPERSDDALFAL). Positions 498–507 (ERSDDALFAL) are enriched in basic and acidic residues.

It belongs to the TOM1 family. Interacts with clathrin, SRC and TOLLIP. Interacts with MYO6. Ubiquitously expressed. Splicing pattern displays tissue specific variation.

Its function is as follows. Acts as a MYO6/Myosin VI adapter protein that targets myosin VI to endocytic structures. May also play a role in recruiting clathrin to endosomes. May regulate growth factor-induced mitogenic signaling. The polypeptide is TOM1-like protein 2 (Tom1l2) (Mus musculus (Mouse)).